Here is a 122-residue protein sequence, read N- to C-terminus: Large ribosomal subunit protein uL14 (122 aa).

This sequence belongs to the universal ribosomal protein uL14 family. In terms of assembly, part of the 50S ribosomal subunit. Forms a cluster with proteins L3 and L19. In the 70S ribosome, L14 and L19 interact and together make contacts with the 16S rRNA in bridges B5 and B8.

Functionally, binds to 23S rRNA. Forms part of two intersubunit bridges in the 70S ribosome. The polypeptide is Large ribosomal subunit protein uL14 (Finegoldia magna (strain ATCC 29328 / DSM 20472 / WAL 2508) (Peptostreptococcus magnus)).